The chain runs to 213 residues: uncharacterized protein (213 aa).

This is an uncharacterized protein from Saccharomyces cerevisiae (strain ATCC 204508 / S288c) (Baker's yeast).